A 208-amino-acid polypeptide reads, in one-letter code: Translation initiation factor 2 subunit beta (208 aa).

The TRAM domain maps to 145–203; the sequence is VIEEGETYELRIESVGSKGDGIAKVDKYLIFVPNTSKGEIVKAKVKKISGTLAFAEIVE.

The protein belongs to the eIF-2-beta/eIF-5 family. In terms of assembly, heterotrimer composed of an alpha, a beta and a gamma chain.

Its function is as follows. eIF-2 functions in the early steps of protein synthesis by forming a ternary complex with GTP and initiator tRNA. The protein is Translation initiation factor 2 subunit beta of Methanothrix thermoacetophila (strain DSM 6194 / JCM 14653 / NBRC 101360 / PT) (Methanosaeta thermophila).